The primary structure comprises 149 residues: Nucleoside diphosphate kinase (149 aa).

ATP is bound by residues Lys9, Phe57, Arg85, Thr91, Arg102, and Asn112. His115 acts as the Pros-phosphohistidine intermediate in catalysis.

Belongs to the NDK family. In terms of assembly, homotetramer. Mg(2+) serves as cofactor.

The protein localises to the cytoplasm. The enzyme catalyses a 2'-deoxyribonucleoside 5'-diphosphate + ATP = a 2'-deoxyribonucleoside 5'-triphosphate + ADP. The catalysed reaction is a ribonucleoside 5'-diphosphate + ATP = a ribonucleoside 5'-triphosphate + ADP. Major role in the synthesis of nucleoside triphosphates other than ATP. The ATP gamma phosphate is transferred to the NDP beta phosphate via a ping-pong mechanism, using a phosphorylated active-site intermediate. The protein is Nucleoside diphosphate kinase of Desulforamulus reducens (strain ATCC BAA-1160 / DSM 100696 / MI-1) (Desulfotomaculum reducens).